The chain runs to 504 residues: MNIKPEEITSIIRQQIENFNTNIETIDSGTIIQIGDGIARVYGLEDCMEGELIEFPNDVYGMALNLEQDNVGCVLLGSEEGIKEGNVVKRTKKVVEVPVGEALVGRVVNSLGMPIDGKGPVLTTETRDVEVPAPGVIDRQSVKEPLQTGIKAIDSMIPIGKGQRELIIGDRQTGKTAIAMDTILNQKGKDVICIYVAIGQKQSTVAHIVNDLTKMGAMDYTIVVSSTASDSAPLQYLAPYAGCSMGEYFMHKGKDVLIVYDDLSKHAVAYRTMSLLLRRPPGREAYPGDVFYLHSRLLERSARLSEKLGGGSLTALPIVETLAGDVTAYIPTNVISITDGQIFLESELFNAGQRPAVNAGISVSRVGGNAQIKAMKQVAGTLRLELAQYRELAAFSQFGSDLDKESVKRLEKGKRLVEILKQPQYSPMPVEKEIIILYAAVSNHLIDIPVNKIKEFEKELFNYIDTHYRDIGKDILEHKQLTDELKSKLDKAINDFKNVFLSEI.

169-176 is an ATP binding site; that stretch reads GDRQTGKT.

It belongs to the ATPase alpha/beta chains family. As to quaternary structure, F-type ATPases have 2 components, CF(1) - the catalytic core - and CF(0) - the membrane proton channel. CF(1) has five subunits: alpha(3), beta(3), gamma(1), delta(1), epsilon(1). CF(0) has three main subunits: a(1), b(2) and c(9-12). The alpha and beta chains form an alternating ring which encloses part of the gamma chain. CF(1) is attached to CF(0) by a central stalk formed by the gamma and epsilon chains, while a peripheral stalk is formed by the delta and b chains.

The protein resides in the cell membrane. The catalysed reaction is ATP + H2O + 4 H(+)(in) = ADP + phosphate + 5 H(+)(out). Produces ATP from ADP in the presence of a proton gradient across the membrane. The alpha chain is a regulatory subunit. This is ATP synthase subunit alpha from Clostridium botulinum (strain ATCC 19397 / Type A).